Reading from the N-terminus, the 351-residue chain is 2-Hydroxyacid oxidase 2 (351 aa).

Residues 2-351 (SLVCLTDFQA…NRNLVQFSRL (350 aa)) enclose the FMN hydroxy acid dehydrogenase domain. FMN-binding positions include 77-79 (PTG), serine 106, and glutamine 128. Tyrosine 130 serves as a coordination point for a 2-oxocarboxylate. Threonine 156 contacts FMN. Arginine 165 is an a 2-oxocarboxylate binding site. Phosphothreonine is present on threonine 178. FMN is bound at residue lysine 222. Catalysis depends on histidine 246, which acts as the Proton acceptor. Arginine 249 serves as a coordination point for a 2-oxocarboxylate. FMN contacts are provided by residues 277 to 281 (DGGVR) and 300 to 301 (GR). The short motif at 349–351 (SRL) is the Microbody targeting signal element.

The protein belongs to the FMN-dependent alpha-hydroxy acid dehydrogenase family. As to quaternary structure, homotetramer. FMN is required as a cofactor. Expressed in the liver and kidney.

The protein resides in the peroxisome. The enzyme catalyses a (2S)-2-hydroxycarboxylate + O2 = a 2-oxocarboxylate + H2O2. The catalysed reaction is 2-hydroxyhexadecanoate + O2 = 2-oxohexadecanoate + H2O2. It carries out the reaction 2-hydroxyoctanoate + O2 = 2-oxooctanoate + H2O2. Its pathway is lipid metabolism; fatty acid metabolism. In terms of biological role, oxidase that catalyzes the oxidation of medium and long chain hydroxyacids such as 2-hydroxyhexadecanoate and 2-hydroxyoctanoate, to the correspondong 2-oxoacids. Its role in the oxidation of 2-hydroxy fatty acids may contribute to the general pathway of fatty acid alpha-oxidation. Active in vitro with the artificial electron acceptor 2,6-dichlorophenolindophenol (DCIP), but O2 is believed to be the physiological electron acceptor, leading to the production of H2O2. Is not active on glycolate, glyoxylate, L-lactate and 2-hydroxybutanoate. This is 2-Hydroxyacid oxidase 2 (HAO2) from Homo sapiens (Human).